Reading from the N-terminus, the 552-residue chain is CTP synthase (552 aa).

An amidoligase domain region spans residues 1–271; the sequence is MASAASSKHL…DAFVVRRLGL (271 aa). Residue S18 participates in CTP binding. UTP is bound at residue S18. ATP-binding positions include 19–24 and D76; that span reads SLGKGL. Positions 76 and 145 each coordinate Mg(2+). Residues 152–154, 192–197, and K228 each bind CTP; these read DIE and KTKPTQ. UTP is bound by residues 192-197 and K228; that span reads KTKPTQ. The Glutamine amidotransferase type-1 domain maps to 296 to 546; sequence TIALVGKYVD…IEAALKYSAG (251 aa). G359 serves as a coordination point for L-glutamine. The active-site Nucleophile; for glutamine hydrolysis is C386. L-glutamine-binding positions include 387 to 390, E410, and R472; that span reads LGLQ. Catalysis depends on residues H519 and E521.

It belongs to the CTP synthase family. In terms of assembly, homotetramer.

It carries out the reaction UTP + L-glutamine + ATP + H2O = CTP + L-glutamate + ADP + phosphate + 2 H(+). The catalysed reaction is L-glutamine + H2O = L-glutamate + NH4(+). The enzyme catalyses UTP + NH4(+) + ATP = CTP + ADP + phosphate + 2 H(+). Its pathway is pyrimidine metabolism; CTP biosynthesis via de novo pathway; CTP from UDP: step 2/2. Allosterically activated by GTP, when glutamine is the substrate; GTP has no effect on the reaction when ammonia is the substrate. The allosteric effector GTP functions by stabilizing the protein conformation that binds the tetrahedral intermediate(s) formed during glutamine hydrolysis. Inhibited by the product CTP, via allosteric rather than competitive inhibition. Catalyzes the ATP-dependent amination of UTP to CTP with either L-glutamine or ammonia as the source of nitrogen. Regulates intracellular CTP levels through interactions with the four ribonucleotide triphosphates. This Thermobifida fusca (strain YX) protein is CTP synthase.